The chain runs to 453 residues: uncharacterized protein (453 aa).

To B.subtilis YcdB.

This is an uncharacterized protein from Bacillus subtilis (strain 168).